A 119-amino-acid polypeptide reads, in one-letter code: Ribonuclease P protein component (119 aa).

The protein belongs to the RnpA family. Consists of a catalytic RNA component (M1 or rnpB) and a protein subunit.

The enzyme catalyses Endonucleolytic cleavage of RNA, removing 5'-extranucleotides from tRNA precursor.. In terms of biological role, RNaseP catalyzes the removal of the 5'-leader sequence from pre-tRNA to produce the mature 5'-terminus. It can also cleave other RNA substrates such as 4.5S RNA. The protein component plays an auxiliary but essential role in vivo by binding to the 5'-leader sequence and broadening the substrate specificity of the ribozyme. The chain is Ribonuclease P protein component from Coprothermobacter proteolyticus (strain ATCC 35245 / DSM 5265 / OCM 4 / BT).